A 251-amino-acid polypeptide reads, in one-letter code: MKVIFNADDFGLTQGVNNGIVKSHQDGVVKSTTMMVGMDAEQNAIELAHQNPDLKIGVHLRFTAGAPLTEHPNLTNGRTHFVKYSELWNKQDFEAQAVYDEAKAQIDHFLSLGLTLSHLDSHHHAHTHPQILPIVQKLAKEHRVPLRGSGICHQPMTTSYFFTDEFYDQKVSLDGLMQHLLSLKENYDVVEVMCHPAYADQPLIMKSGYALQRELELQVLTSPILKEQLAQHGIAVTDYSALVSTSQVVGV.

Residues H59 and H122 each coordinate Mg(2+).

The protein belongs to the YdjC deacetylase family. As to quaternary structure, homodimer. Requires Mg(2+) as cofactor.

Functionally, probably catalyzes the deacetylation of acetylated carbohydrates an important step in the degradation of oligosaccharides. This is Carbohydrate deacetylase from Vibrio parahaemolyticus serotype O3:K6 (strain RIMD 2210633).